The following is a 252-amino-acid chain: Isoprenyl transferase (252 aa).

Residue D28 is part of the active site. D28 lines the Mg(2+) pocket. Residues 29 to 32 (GNGR), W33, R41, H45, and 73 to 75 (STE) contribute to the substrate site. N76 acts as the Proton acceptor in catalysis. Substrate contacts are provided by residues W77, R79, R200, and 206–208 (RLS). E219 is a binding site for Mg(2+).

Belongs to the UPP synthase family. As to quaternary structure, homodimer. Mg(2+) serves as cofactor.

Its function is as follows. Catalyzes the condensation of isopentenyl diphosphate (IPP) with allylic pyrophosphates generating different type of terpenoids. The chain is Isoprenyl transferase from Streptococcus pneumoniae serotype 4 (strain ATCC BAA-334 / TIGR4).